Here is a 621-residue protein sequence, read N- to C-terminus: Zinc metalloproteinase-disintegrin-like NaMP (621 aa).

An N-terminal signal peptide occupies residues 1-20 (MIQPLLVAICLVVFPYQGSS). A propeptide spanning residues 21–188 (TILESGKVRD…GESDETIKKI (168 aa)) is cleaved from the precursor. Positions 206 to 402 (KHIELYMVAD…KSAQCILNDP (197 aa)) constitute a Peptidase M12B domain. N-linked (GlcNAc...) asparagine glycans are attached at residues Asn-225, Asn-268, and Asn-319. 17 cysteine pairs are disulfide-bonded: Cys-317-Cys-397, Cys-357-Cys-381, Cys-359-Cys-364, Cys-413-Cys-442, Cys-424-Cys-437, Cys-426-Cys-432, Cys-436-Cys-459, Cys-450-Cys-456, Cys-455-Cys-481, Cys-468-Cys-488, Cys-475-Cys-507, Cys-500-Cys-512, Cys-519-Cys-569, Cys-534-Cys-579, Cys-547-Cys-557, Cys-564-Cys-605, and Cys-599-Cys-610. Residue His-342 participates in Zn(2+) binding. The active site involves Glu-343. Residues His-346 and His-352 each coordinate Zn(2+). Residues 410–496 (TAICGNGFVE…ECPMNHFHMN (87 aa)) enclose the Disintegrin domain. Positions 474-476 (DCD) match the D/ECD-tripeptide motif. Asn-551 is a glycosylation site (N-linked (GlcNAc...) asparagine).

It belongs to the venom metalloproteinase (M12B) family. P-III subfamily. P-IIIa sub-subfamily. Monomer. Zn(2+) serves as cofactor. As to expression, expressed by the venom gland.

It localises to the secreted. Functionally, snake venom zinc metalloproteinase that inhibits platelet aggregation and degrades fibrinogen. This chain is Zinc metalloproteinase-disintegrin-like NaMP, found in Naja atra (Chinese cobra).